The sequence spans 463 residues: ATP-dependent protease ATPase subunit HslU (463 aa).

ATP is bound by residues Ile19 and 61 to 66; that span reads GVGKTE. The disordered stretch occupies residues 154-174; sequence FGGAQNSSQTSDTQEDGEIEK. 3 residues coordinate ATP: Asp277, Glu341, and Arg413.

The protein belongs to the ClpX chaperone family. HslU subfamily. As to quaternary structure, a double ring-shaped homohexamer of HslV is capped on each side by a ring-shaped HslU homohexamer. The assembly of the HslU/HslV complex is dependent on binding of ATP.

It localises to the cytoplasm. ATPase subunit of a proteasome-like degradation complex; this subunit has chaperone activity. The binding of ATP and its subsequent hydrolysis by HslU are essential for unfolding of protein substrates subsequently hydrolyzed by HslV. HslU recognizes the N-terminal part of its protein substrates and unfolds these before they are guided to HslV for hydrolysis. The sequence is that of ATP-dependent protease ATPase subunit HslU from Bacillus cereus (strain G9842).